Consider the following 1018-residue polypeptide: Integrator complex subunit 5 (1018 aa).

Residues 1–26 (MSALCDPPGAPGPPGPAPATHGPAPL) are disordered. N-acetylserine is present on Ser-2. Residues 8 to 17 (PGAPGPPGPA) are compositionally biased toward pro residues. The residue at position 278 (Ser-278) is a Phosphoserine. Helical transmembrane passes span 533–553 (LATQLYAGLVVSLSGLLPLAF), 855–875 (LLFELLKLVAAAPPALCYCSV), and 929–949 (VFSQLAPFEVRLLLLSVWGFL).

Belongs to the Integrator subunit 5 family. In terms of assembly, component of the Integrator complex, composed of core subunits INTS1, INTS2, INTS3, INTS4, INTS5, INTS6, INTS7, INTS8, INTS9/RC74, INTS10, INTS11/CPSF3L, INTS12, INTS13, INTS14 and INTS15. The core complex associates with protein phosphatase 2A subunits PPP2CA and PPP2R1A, to form the Integrator-PP2A (INTAC) complex.

Its subcellular location is the nucleus. The protein localises to the cytoplasm. It localises to the nucleus membrane. Functionally, component of the integrator complex, a multiprotein complex that terminates RNA polymerase II (Pol II) transcription in the promoter-proximal region of genes. The integrator complex provides a quality checkpoint during transcription elongation by driving premature transcription termination of transcripts that are unfavorably configured for transcriptional elongation: the complex terminates transcription by (1) catalyzing dephosphorylation of the C-terminal domain (CTD) of Pol II subunit POLR2A/RPB1 and SUPT5H/SPT5, (2) degrading the exiting nascent RNA transcript via endonuclease activity and (3) promoting the release of Pol II from bound DNA. The integrator complex is also involved in terminating the synthesis of non-coding Pol II transcripts, such as enhancer RNAs (eRNAs), small nuclear RNAs (snRNAs), telomerase RNAs and long non-coding RNAs (lncRNAs). Mediates recruitment of cytoplasmic dynein to the nuclear envelope, probably as component of the integrator complex. In Mus musculus (Mouse), this protein is Integrator complex subunit 5 (Ints5).